The following is a 310-amino-acid chain: tRNA-cytidine(32) 2-sulfurtransferase (310 aa).

The PP-loop motif motif lies at 47–52; it reads SGGKDS. The [4Fe-4S] cluster site is built by Cys122, Cys125, and Cys213.

It belongs to the TtcA family. As to quaternary structure, homodimer. Mg(2+) is required as a cofactor. Requires [4Fe-4S] cluster as cofactor.

The protein resides in the cytoplasm. The catalysed reaction is cytidine(32) in tRNA + S-sulfanyl-L-cysteinyl-[cysteine desulfurase] + AH2 + ATP = 2-thiocytidine(32) in tRNA + L-cysteinyl-[cysteine desulfurase] + A + AMP + diphosphate + H(+). The protein operates within tRNA modification. Its function is as follows. Catalyzes the ATP-dependent 2-thiolation of cytidine in position 32 of tRNA, to form 2-thiocytidine (s(2)C32). The sulfur atoms are provided by the cysteine/cysteine desulfurase (IscS) system. This chain is tRNA-cytidine(32) 2-sulfurtransferase, found in Serratia proteamaculans (strain 568).